A 119-amino-acid polypeptide reads, in one-letter code: ETRYEKFLRQHVDYPRTAAPDTRTYCNQMMQRRGMTSPVCKFTNTFVHASAASITTICGPGGAPAGGNLRDSTASFALTTCRLQGGSQRPPCNYNGGTSTQRIRIACDGGLPVHYDRAI.

Residues Lys-6 and Arg-9 each contribute to the substrate site. Residue His-11 is the Proton acceptor of the active site. 3 cysteine pairs are disulfide-bonded: Cys-26–Cys-81, Cys-40–Cys-92, and Cys-58–Cys-107. Substrate contacts are provided by residues 41–45 (KFTNT) and Arg-82. The active-site Proton donor is the His-114.

Belongs to the pancreatic ribonuclease family. As to quaternary structure, monomer. Interacts with and forms tight 1:1 complexes with RNH1. Dimerization of two such complexes may occur. Interaction with RNH1 inhibits this protein.

The protein resides in the secreted. It carries out the reaction an [RNA] containing cytidine + H2O = an [RNA]-3'-cytidine-3'-phosphate + a 5'-hydroxy-ribonucleotide-3'-[RNA].. It catalyses the reaction an [RNA] containing uridine + H2O = an [RNA]-3'-uridine-3'-phosphate + a 5'-hydroxy-ribonucleotide-3'-[RNA].. In terms of biological role, endonuclease that catalyzes the cleavage of RNA on the 3' side of pyrimidine nucleotides. Acts on single-stranded and double-stranded RNA. The sequence is that of Ribonuclease from Chelonia mydas (Green sea-turtle).